A 160-amino-acid chain; its full sequence is Archaemetzincin (160 aa).

Histidine 117 is a binding site for Zn(2+). The active-site Proton acceptor is the glutamate 118. Zn(2+)-binding residues include histidine 121, histidine 127, cysteine 128, cysteine 132, cysteine 151, and cysteine 154.

It belongs to the peptidase M54 family. As to quaternary structure, monomer. The cofactor is Zn(2+).

Its function is as follows. Probable zinc metalloprotease whose natural substrate is unknown. This is Archaemetzincin from Archaeoglobus fulgidus (strain ATCC 49558 / DSM 4304 / JCM 9628 / NBRC 100126 / VC-16).